We begin with the raw amino-acid sequence, 357 residues long: 3-dehydroquinate synthase (357 aa).

NAD(+) contacts are provided by residues 104–108 (GVVGD), 128–129 (TT), Lys-141, and 168–171 (FLET). Zn(2+) is bound by residues Glu-183, His-243, and His-260.

Belongs to the sugar phosphate cyclases superfamily. Dehydroquinate synthase family. NAD(+) serves as cofactor. The cofactor is Co(2+). Requires Zn(2+) as cofactor.

It localises to the cytoplasm. It catalyses the reaction 7-phospho-2-dehydro-3-deoxy-D-arabino-heptonate = 3-dehydroquinate + phosphate. Its pathway is metabolic intermediate biosynthesis; chorismate biosynthesis; chorismate from D-erythrose 4-phosphate and phosphoenolpyruvate: step 2/7. In terms of biological role, catalyzes the conversion of 3-deoxy-D-arabino-heptulosonate 7-phosphate (DAHP) to dehydroquinate (DHQ). The sequence is that of 3-dehydroquinate synthase from Streptococcus pyogenes serotype M18 (strain MGAS8232).